The primary structure comprises 434 residues: E3 ubiquitin-protein ligase siah-1 (434 aa).

The tract at residues 27–88 is disordered; that stretch reads FEEDENAGPE…NGNTPSVTIP (62 aa). Residues 43-55 are compositionally biased toward low complexity; sequence SSSSASSQRSSAS. Residues 74–88 are compositionally biased toward polar residues; it reads MSNNQNGNTPSVTIP. The RING-type; degenerate zinc finger occupies 171–206; sequence CPVCLEYMLPPYMQCPSGHLVCSNCRPKLQCCPTCR. An SBD region spans residues 220–415; sequence IANTVRFPCK…LGINVTISRI (196 aa). An SIAH-type; degenerate zinc finger spans residues 223–283; it reads TVRFPCKFSN…VMDHLKKVHK (61 aa). Zn(2+)-binding residues include Cys228, Cys235, His247, Cys251, Cys258, Cys265, His277, and His282.

This sequence belongs to the SINA (Seven in absentia) family. Interacts with tir-1.

The catalysed reaction is S-ubiquitinyl-[E2 ubiquitin-conjugating enzyme]-L-cysteine + [acceptor protein]-L-lysine = [E2 ubiquitin-conjugating enzyme]-L-cysteine + N(6)-ubiquitinyl-[acceptor protein]-L-lysine.. It participates in protein modification; protein ubiquitination. E3 ubiquitin-protein ligase that mediates ubiquitination and subsequent proteasomal degradation of target proteins. E3 ubiquitin ligases accept ubiquitin from an E2 ubiquitin-conjugating enzyme in the form of a thioester and then directly transfers the ubiquitin to targeted substrates. It probably triggers the ubiquitin-mediated degradation of different substrates. This chain is E3 ubiquitin-protein ligase siah-1, found in Caenorhabditis briggsae.